A 490-amino-acid polypeptide reads, in one-letter code: Hydroxysteroid dehydrogenase-like protein 2 (490 aa).

NADP(+) is bound by residues 17 to 23 (GASRGIG), Lys42, and Asp74. Lys42 carries the post-translational modification N6-(2-hydroxyisobutyryl)lysine. At Lys116 the chain carries N6-acetyllysine. Tyr168 acts as the Proton acceptor in catalysis. Lys172 contributes to the NADP(+) binding site. Positions 282–301 (MEEKESNDSVPEVKEEKLQL) are enriched in basic and acidic residues. Residues 282–370 (MEEKESNDSV…PRQQPQPFVQ (89 aa)) form a disordered region. Low complexity predominate over residues 302–367 (QEESQLQKQP…QPRPRQQPQP (66 aa)). Positions 380 to 487 (GAVEETFRIV…KLEKLMTQMN (108 aa)) constitute an SCP2 domain. Lys390 bears the N6-succinyllysine mark.

Belongs to the short-chain dehydrogenases/reductases (SDR) family. As to expression, widely expressed.

Its subcellular location is the peroxisome. The protein localises to the mitochondrion. Functionally, has apparently no steroid dehydrogenase activity. Controls bile acid (BA) and lipid metabolism in response to nutritional cues. This Mus musculus (Mouse) protein is Hydroxysteroid dehydrogenase-like protein 2 (Hsdl2).